The primary structure comprises 493 residues: Cobyric acid synthase (493 aa).

A GATase cobBQ-type domain is found at Pro246–Phe440. Cys326 (nucleophile) is an active-site residue. Residue His432 is part of the active site.

Belongs to the CobB/CobQ family. CobQ subfamily.

It participates in cofactor biosynthesis; adenosylcobalamin biosynthesis. Its function is as follows. Catalyzes amidations at positions B, D, E, and G on adenosylcobyrinic A,C-diamide. NH(2) groups are provided by glutamine, and one molecule of ATP is hydrogenolyzed for each amidation. The polypeptide is Cobyric acid synthase (Clostridium botulinum (strain Okra / Type B1)).